A 1088-amino-acid polypeptide reads, in one-letter code: RNA-directed RNA polymerase (1088 aa).

The 187-residue stretch at 501 to 687 folds into the RdRp catalytic domain; sequence LSYGDVTRFL…AKRYIAGGKI (187 aa).

Belongs to the reoviridae RNA-directed RNA polymerase family. In terms of assembly, interacts with VP3 (Potential). Interacts with VP2; this interaction activates VP1. Interacts with NSP5; this interaction is probably necessary for the formation of functional virus factories. Interacts with NSP2; this interaction is weak. It depends on Mg(2+) as a cofactor.

Its subcellular location is the virion. It carries out the reaction RNA(n) + a ribonucleoside 5'-triphosphate = RNA(n+1) + diphosphate. Its function is as follows. RNA-directed RNA polymerase that is involved in both transcription and genome replication. Together with VP3 capping enzyme, forms an enzyme complex positioned near the channels situated at each of the five-fold vertices of the core. Following infection, the outermost layer of the virus is lost, leaving a double-layered particle (DLP) made up of the core and VP6 shell. VP1 then catalyzes the transcription of fully conservative plus-strand genomic RNAs that are extruded through the DLP's channels into the cytoplasm where they function as mRNAs for translation of viral proteins. One copy of each of the viral (+)RNAs is also recruited during core assembly, together with newly synthesized polymerase complexes and VP2. The polymerase of these novo-formed particles catalyzes the synthesis of complementary minus-strands leading to dsRNA formation. To do so, the polymerase specifically recognizes and binds 4 bases 5'-UGUG-3' in the conserved 3'-sequence of plus-strand RNA templates. VP2 presumably activates the autoinhibited VP1-RNA complex to coordinate packaging and genome replication. Once dsRNA synthesis is complete, the polymerase switches to the transcriptional mode, thus providing secondary transcription. This Rotavirus A (strain RVA/SA11-Patton/G3P[X]) (RV-A) protein is RNA-directed RNA polymerase.